A 1295-amino-acid chain; its full sequence is DNA-directed RNA polymerase subunit beta' (1295 aa).

Positions 60, 62, 75, and 78 each coordinate Zn(2+). The Mg(2+) site is built by Asp-516, Asp-518, and Asp-520. 4 residues coordinate Zn(2+): Cys-841, Cys-914, Cys-921, and Cys-924.

The protein belongs to the RNA polymerase beta' chain family. As to quaternary structure, the RNAP catalytic core consists of 2 alpha, 1 beta, 1 beta' and 1 omega subunit. When a sigma factor is associated with the core the holoenzyme is formed, which can initiate transcription. The cofactor is Mg(2+). Requires Zn(2+) as cofactor.

It catalyses the reaction RNA(n) + a ribonucleoside 5'-triphosphate = RNA(n+1) + diphosphate. DNA-dependent RNA polymerase catalyzes the transcription of DNA into RNA using the four ribonucleoside triphosphates as substrates. The chain is DNA-directed RNA polymerase subunit beta' from Dehalococcoides mccartyi (strain ATCC BAA-2266 / KCTC 15142 / 195) (Dehalococcoides ethenogenes (strain 195)).